A 115-amino-acid chain; its full sequence is Large ribosomal subunit protein bL20c (115 aa).

It belongs to the bacterial ribosomal protein bL20 family.

The protein localises to the plastid. The protein resides in the chloroplast. Its function is as follows. Binds directly to 23S ribosomal RNA and is necessary for the in vitro assembly process of the 50S ribosomal subunit. It is not involved in the protein synthesizing functions of that subunit. The polypeptide is Large ribosomal subunit protein bL20c (Gnetum parvifolium (Small-leaved jointfir)).